The following is a 100-amino-acid chain: Large ribosomal subunit protein uL23 (100 aa).

Belongs to the universal ribosomal protein uL23 family. Part of the 50S ribosomal subunit. Contacts protein L29, and trigger factor when it is bound to the ribosome.

In terms of biological role, one of the early assembly proteins it binds 23S rRNA. One of the proteins that surrounds the polypeptide exit tunnel on the outside of the ribosome. Forms the main docking site for trigger factor binding to the ribosome. In Synechococcus sp. (strain CC9311), this protein is Large ribosomal subunit protein uL23.